We begin with the raw amino-acid sequence, 459 residues long: Fibrinogen C domain-containing protein 1 (459 aa).

The disordered stretch occupies residues 1–22; it reads MVHERWKTVGSASQLEDRPRDK. Residues 1 to 33 lie on the Cytoplasmic side of the membrane; it reads MVHERWKTVGSASQLEDRPRDKPQRASCSYVLC. The chain crosses the membrane as a helical; Signal-anchor for type II membrane protein span at residues 34-54; that stretch reads TVLLSLAVLLAVAVTGVVLFL. Residues 55 to 459 lie on the Extracellular side of the membrane; the sequence is NHTHTPGTAP…MKIRPVREDR (405 aa). The Fibrinogen C-terminal domain maps to 233 to 456; the sequence is CANGSRPRDC…FSEMKIRPVR (224 aa). Cys-242 and Cys-271 are joined by a disulfide. Residue Asn-338 is glycosylated (N-linked (GlcNAc...) asparagine). Residues Asp-391 and Asp-393 each coordinate Ca(2+). Cys-399 and Cys-412 are disulfide-bonded.

As to quaternary structure, homotetramer; disulfide-linked.

The protein localises to the membrane. Acetyl group-binding receptor which shows a high-affinity and calcium-dependent binding to acetylated structures such as chitin, some N-acetylated carbohydrates, and amino acids, but not to their non-acetylated counterparts. Can facilitate the endocytosis of acetylated components. The sequence is that of Fibrinogen C domain-containing protein 1 (Fibcd1) from Mus musculus (Mouse).